The primary structure comprises 131 residues: Phosphoribosyl-AMP cyclohydrolase (131 aa).

Asp-89 serves as a coordination point for Mg(2+). Cys-90 contributes to the Zn(2+) binding site. Asp-91 and Asp-93 together coordinate Mg(2+). Zn(2+) contacts are provided by Cys-106 and Cys-113.

This sequence belongs to the PRA-CH family. As to quaternary structure, homodimer. Requires Mg(2+) as cofactor. Zn(2+) serves as cofactor.

The protein localises to the cytoplasm. It carries out the reaction 1-(5-phospho-beta-D-ribosyl)-5'-AMP + H2O = 1-(5-phospho-beta-D-ribosyl)-5-[(5-phospho-beta-D-ribosylamino)methylideneamino]imidazole-4-carboxamide. It participates in amino-acid biosynthesis; L-histidine biosynthesis; L-histidine from 5-phospho-alpha-D-ribose 1-diphosphate: step 3/9. Functionally, catalyzes the hydrolysis of the adenine ring of phosphoribosyl-AMP. This chain is Phosphoribosyl-AMP cyclohydrolase, found in Bifidobacterium longum (strain DJO10A).